Here is a 447-residue protein sequence, read N- to C-terminus: Exodeoxyribonuclease 7 large subunit (447 aa).

It belongs to the XseA family. Heterooligomer composed of large and small subunits.

Its subcellular location is the cytoplasm. The enzyme catalyses Exonucleolytic cleavage in either 5'- to 3'- or 3'- to 5'-direction to yield nucleoside 5'-phosphates.. Bidirectionally degrades single-stranded DNA into large acid-insoluble oligonucleotides, which are then degraded further into small acid-soluble oligonucleotides. The sequence is that of Exodeoxyribonuclease 7 large subunit from Lactobacillus helveticus (strain DPC 4571).